Here is a 347-residue protein sequence, read N- to C-terminus: MQIKFWPQDLKLAHTWTIASSVTSGSDVTSVGIVQLTDRDGTVGLGEAAPARRYNESTPGSLDFIAKVDATKLSFDNIEASMKYVESLASGQFAAKSAINVALLDGAARKAGKPIYDLLGLGFRNNHHVTSFSIGIDKADVIRKKVLAAEQYPVLKLKVGAADDKANLAALREAAPQKWVRVDANEGWKTKEHALEMIEWLAQDKFIQYIEQPMPADSNPKDIAWLKARSPLPLFGDESYHTAKDVDHCAECYHGVNVKLCKTGGISNAYEALQVARKAGLKTMIGCMIETSILISAAAHLAELCDYLDIDGNLLTTNDPYLGVTAEKGLLSFASAPEKLGLRVRAK.

Position 156 to 158 (156 to 158 (KLK)) interacts with substrate. Residues Asp183, Glu211, and Asp237 each coordinate Mg(2+). Substrate contacts are provided by residues Lys259 and 309–311 (DID).

The protein belongs to the mandelate racemase/muconate lactonizing enzyme family. Mg(2+) is required as a cofactor.

In terms of biological role, dipeptide epimerase with a broad substrate specificity. Catalyzes the epimerization of L-Ala-L-Ala, L-Ala-L-Ser, L-Ala-L-Thr, L-Ala-L-Met, L-Ala-L-Phe, L-Ala-L-Tyr, L-Gly-L-Asp, L-Val-L-Asp, L-Val-L-Glu and L-Val-L-Phe (in vitro). Can also catalyze the epimerization of L-Ala-L-Glu, but with lower efficiency. This chain is L-Ala-D/L-amino acid epimerase, found in Pedosphaera parvula (strain Ellin514).